We begin with the raw amino-acid sequence, 253 residues long: DnaJ homolog subfamily C member 8 (253 aa).

A2 carries the post-translational modification N-acetylalanine. S35 carries the phosphoserine modification. In terms of domain architecture, J spans 57 to 124 (NPFEVLQIDP…QKKRALDVIQ (68 aa)). An N6-acetyllysine modification is found at K146. Basic and acidic residues predominate over residues 181–222 (EAKEMHERKRQREEEIEAQEKAKREREWQKNFEESRDGRVDS). Residues 181–253 (EAKEMHERKR…PPKVKMEQRE (73 aa)) form a disordered region. Short sequence motifs (nuclear localization signal) lie at residues 189–192 (KRQR) and 203–206 (KRER). Position 222 is a phosphoserine (S222). Residues 231-240 (KGKKEKKNRT) are compositionally biased toward basic residues. The essential for polyglutamine aggregation suppression stretch occupies residues 232–253 (GKKEKKNRTFLRPPKVKMEQRE).

Interacts with SRPK1. Interacts with HSP70 (HSPA1A or HSPA1B). Ubiquitous.

Its subcellular location is the nucleus. In terms of biological role, suppresses polyglutamine (polyQ) aggregation of ATXN3 in neuronal cells. The chain is DnaJ homolog subfamily C member 8 (DNAJC8) from Homo sapiens (Human).